The primary structure comprises 55 residues: Large ribosomal subunit protein bL33c (55 aa).

It belongs to the bacterial ribosomal protein bL33 family.

Its subcellular location is the plastid. It is found in the chloroplast. In Emiliania huxleyi (Coccolithophore), this protein is Large ribosomal subunit protein bL33c.